Consider the following 350-residue polypeptide: Phosphate acyltransferase (350 aa).

Belongs to the PlsX family. As to quaternary structure, homodimer. Probably interacts with PlsY.

The protein localises to the cytoplasm. The enzyme catalyses a fatty acyl-[ACP] + phosphate = an acyl phosphate + holo-[ACP]. The protein operates within lipid metabolism; phospholipid metabolism. Its function is as follows. Catalyzes the reversible formation of acyl-phosphate (acyl-PO(4)) from acyl-[acyl-carrier-protein] (acyl-ACP). This enzyme utilizes acyl-ACP as fatty acyl donor, but not acyl-CoA. This Magnetococcus marinus (strain ATCC BAA-1437 / JCM 17883 / MC-1) protein is Phosphate acyltransferase.